Here is a 2167-residue protein sequence, read N- to C-terminus: Papilin (2167 aa).

An N-terminal signal peptide occupies residues 1–19 (MRLLLFSAALLLCSVPTWA). The 48-residue stretch at 76-123 (TGNWGPWVPENECSRSCGGGVQLEKRQCSGDCTGASVRYISCNLNACE) folds into the TSP type-1 1 domain. 3 cysteine pairs are disulfide-bonded: Cys-88–Cys-117, Cys-92–Cys-122, and Cys-103–Cys-107. An N-linked (GlcNAc...) asparagine glycan is attached at Asn-268. TSP type-1 domains lie at 341 to 402 (VDYM…VDCE), 404 to 459 (EWFT…TCNR), and 461 to 525 (ACPE…GPCE). Cystine bridges form between Cys-353-Cys-396, Cys-357-Cys-401, and Cys-368-Cys-382. Asn-386 and Asn-445 each carry an N-linked (GlcNAc...) asparagine glycan. Residues Asn-541, Asn-568, and Asn-638 are each glycosylated (N-linked (GlcNAc...) asparagine). TSP type-1 domains are found at residues 585 to 643 (CEYE…TNEE) and 645 to 702 (CTGT…DDCP). Residues Asn-715, Asn-729, Asn-741, Asn-814, Asn-820, Asn-857, Asn-933, and Asn-1090 are each glycosylated (N-linked (GlcNAc...) asparagine). Cystine bridges form between Cys-1089/Cys-1141, Cys-1099/Cys-1124, Cys-1116/Cys-1137, Cys-1150/Cys-1202, Cys-1161/Cys-1185, and Cys-1177/Cys-1198. 2 BPTI/Kunitz inhibitor domains span residues 1089-1141 (CNQT…ETIC) and 1150-1202 (CYLP…SMFC). Positions 1239 to 1273 (QSAEQPQPQQPQQQQQQQQQQPQQPRQSMEDICRS) are disordered. Over residues 1243–1263 (QPQPQQPQQQQQQQQQQPQQP) the composition is skewed to low complexity. Intrachain disulfides connect Cys-1271–Cys-1321, Cys-1280–Cys-1304, and Cys-1296–Cys-1317. One can recognise a BPTI/Kunitz inhibitor 3 domain in the interval 1271 to 1321 (CRSRQDAGPCETYSDQWFYNAFSQECETFTYGGCGGNLNRFRSKDECEQRC). The interval 1332–1365 (ARQEQAQPAAQPAQPAQPSNIVSPPQQSASPVVV) is disordered. Cystine bridges form between Cys-1375–Cys-1425, Cys-1384–Cys-1408, Cys-1400–Cys-1421, Cys-1447–Cys-1497, Cys-1456–Cys-1480, Cys-1472–Cys-1493, Cys-1504–Cys-1554, Cys-1513–Cys-1537, and Cys-1529–Cys-1550. BPTI/Kunitz inhibitor domains lie at 1375 to 1425 (CHLN…ESLC), 1447 to 1497 (CDEA…KAAC), and 1504 to 1554 (CQLP…QARC). Residues 1556–1615 (KDDQTTTTSQPEELPSLPLVQEDPQPRPAFSLKQSFAHSRRRDAPFARSVSARHHTPDSE) form a disordered region. 9 disulfide bridges follow: Cys-1621-Cys-1671, Cys-1630-Cys-1654, Cys-1646-Cys-1667, Cys-1731-Cys-1781, Cys-1740-Cys-1764, Cys-1756-Cys-1777, Cys-1790-Cys-1840, Cys-1799-Cys-1823, and Cys-1815-Cys-1836. 3 BPTI/Kunitz inhibitor domains span residues 1621–1671 (CYAV…ETSC), 1731–1781 (CMLP…ERAC), and 1790–1840 (CELP…ESLC). Asn-1848 is a glycosylation site (N-linked (GlcNAc...) asparagine). 6 disulfides stabilise this stretch: Cys-1853/Cys-1903, Cys-1862/Cys-1886, Cys-1878/Cys-1899, Cys-1914/Cys-1964, Cys-1923/Cys-1947, and Cys-1939/Cys-1960. BPTI/Kunitz inhibitor domains lie at 1853-1903 (CTLE…QQSC) and 1914-1964 (CTLR…FRRC). N-linked (GlcNAc...) asparagine glycosylation is found at Asn-1992, Asn-2087, and Asn-2133. Residues 2075-2106 (RTTSRPMLTPSKNFSLGTPPTPSPSTVSTTPF) form a disordered region. The segment covering 2078–2090 (SRPMLTPSKNFSL) has biased composition (polar residues). Positions 2124–2163 (TSNSCMDVGNASTCDLIVKNGLCGKKRYGTFCCHTCTRVH) constitute a PLAC domain.

This sequence belongs to the papilin family. In terms of tissue distribution, localizes to the basement membranes of the gonad primordium, pharynx and intestine (at protein level). Expressed in head and CAN neurons, coelomocytes, body-wall muscles and anal depressor and sphincter and stomatointestinal muscles. Expressed Isoform a: is expressed in body wall muscles and distal cell tips. Isoform b: expressed in embryonic muscles.

It localises to the secreted. Its subcellular location is the extracellular space. It is found in the extracellular matrix. The protein localises to the basement membrane. Functionally, involved in pharynx morphogenesis probably by remodeling the basement membrane. Its function is as follows. Plays a role in embryogenesis, the second phase of distal cell tip migration and is required for distribution of the metalloproteinase, mig-17, during organogenesis. Plays a role in post embryonic distal cell tip migration. Essential extracellular matrix (ECM) protein required for hypodermal enclosure in the embryo. This chain is Papilin (mig-6), found in Caenorhabditis elegans.